The chain runs to 448 residues: D-inositol 3-phosphate glycosyltransferase (448 aa).

1D-myo-inositol 3-phosphate contacts are provided by residues His35, 46 to 51, Lys104, Tyr137, Thr161, and Arg181; that span reads DAGGLN. UDP-N-acetyl-alpha-D-glucosamine is bound at residue Gly49. UDP-N-acetyl-alpha-D-glucosamine-binding residues include Arg255, Lys260, and Met321. Residues Tyr330, Arg331, and Ala333 each coordinate Mg(2+). Glu343 and Glu351 together coordinate UDP-N-acetyl-alpha-D-glucosamine. Residue Thr357 participates in Mg(2+) binding.

Belongs to the glycosyltransferase group 1 family. MshA subfamily. Homodimer.

The enzyme catalyses 1D-myo-inositol 3-phosphate + UDP-N-acetyl-alpha-D-glucosamine = 1D-myo-inositol 2-acetamido-2-deoxy-alpha-D-glucopyranoside 3-phosphate + UDP + H(+). Catalyzes the transfer of a N-acetyl-glucosamine moiety to 1D-myo-inositol 3-phosphate to produce 1D-myo-inositol 2-acetamido-2-deoxy-glucopyranoside 3-phosphate in the mycothiol biosynthesis pathway. In Acidothermus cellulolyticus (strain ATCC 43068 / DSM 8971 / 11B), this protein is D-inositol 3-phosphate glycosyltransferase.